Consider the following 216-residue polypeptide: Small ribosomal subunit protein uS3 (216 aa).

Residues 38-106 enclose the KH type-2 domain; that stretch reads LRKMLKDKLY…QANIEIKEVR (69 aa).

It belongs to the universal ribosomal protein uS3 family. Part of the 30S ribosomal subunit. Forms a tight complex with proteins S10 and S14.

In terms of biological role, binds the lower part of the 30S subunit head. Binds mRNA in the 70S ribosome, positioning it for translation. This Thermodesulfovibrio yellowstonii (strain ATCC 51303 / DSM 11347 / YP87) protein is Small ribosomal subunit protein uS3.